Consider the following 402-residue polypeptide: MSRVSQARNLGKYFLLIDNMLVVLGFFVVFPLISIRFVDQMGWAALMVGIALGLRQFIQQGLGIFGGAIADRFGAKPMIVTGMLMRAAGFATMGIAHEPWLLWFSCFLSGLGGTLFDPPRSALVVKLIRPEQRGRFFSLLMMQDSAGAVTGALLGSWLLQYDFRLVCATGAVLFVLCAAFNAWLLPAWKLSTVKIPVREGMGRVMADKRFVTYVLTLAGYYMLAVQVMLMLPIMVNDIAGSPSAVKWMYAIEACLSLTLLYPIARWSEKRFRLEHRLMAGLLLMSLSMLPVGLVGNLQQLFTLICTFYIGSVIAEPARETLSASLADARARGSYMGFSRLGLAIGGAIGYIGGGWLFDMGKALQQPELPWMMLGVIGIMTFLALGWQFSHKRTPRGMLEPGA.

11 consecutive transmembrane segments (helical) span residues 13-33 (YFLL…FPLI), 45-65 (ALMV…LGIF), 99-116 (PWLL…GTLF), 139-159 (LLMM…SWLL), 165-185 (LVCA…AWLL), 214-234 (VLTL…LPIM), 244-264 (AVKW…YPIA), 277-297 (LMAG…VGNL), 300-322 (LFTL…ETLS), 340-360 (LGLA…FDMG), and 368-388 (LPWM…GWQF).

Belongs to the major facilitator superfamily. DHA1 family. MdtH (TC 2.A.1.2.21) subfamily.

The protein resides in the cell inner membrane. This chain is Multidrug resistance protein MdtH, found in Citrobacter koseri (strain ATCC BAA-895 / CDC 4225-83 / SGSC4696).